A 393-amino-acid polypeptide reads, in one-letter code: Methylthioribose-1-phosphate isomerase (393 aa).

The active-site Proton donor is the Asp-265.

Belongs to the eIF-2B alpha/beta/delta subunits family. MtnA subfamily.

The protein resides in the cytoplasm. Its subcellular location is the nucleus. The catalysed reaction is 5-(methylsulfanyl)-alpha-D-ribose 1-phosphate = 5-(methylsulfanyl)-D-ribulose 1-phosphate. It participates in amino-acid biosynthesis; L-methionine biosynthesis via salvage pathway; L-methionine from S-methyl-5-thio-alpha-D-ribose 1-phosphate: step 1/6. Catalyzes the interconversion of methylthioribose-1-phosphate (MTR-1-P) into methylthioribulose-1-phosphate (MTRu-1-P). The polypeptide is Methylthioribose-1-phosphate isomerase (Cryptococcus neoformans var. neoformans serotype D (strain JEC21 / ATCC MYA-565) (Filobasidiella neoformans)).